We begin with the raw amino-acid sequence, 721 residues long: Glycine--tRNA ligase beta subunit (721 aa).

It belongs to the class-II aminoacyl-tRNA synthetase family. Tetramer of two alpha and two beta subunits.

The protein localises to the cytoplasm. It carries out the reaction tRNA(Gly) + glycine + ATP = glycyl-tRNA(Gly) + AMP + diphosphate. The chain is Glycine--tRNA ligase beta subunit from Sinorhizobium medicae (strain WSM419) (Ensifer medicae).